The chain runs to 148 residues: Ribosome-binding factor A (148 aa).

The tract at residues 120-148 (AKAREGASYAGDADPYRTAEPDADDAPRA) is disordered. Positions 133–148 (DPYRTAEPDADDAPRA) are enriched in basic and acidic residues.

This sequence belongs to the RbfA family. In terms of assembly, monomer. Binds 30S ribosomal subunits, but not 50S ribosomal subunits or 70S ribosomes.

Its subcellular location is the cytoplasm. Functionally, one of several proteins that assist in the late maturation steps of the functional core of the 30S ribosomal subunit. Associates with free 30S ribosomal subunits (but not with 30S subunits that are part of 70S ribosomes or polysomes). Required for efficient processing of 16S rRNA. May interact with the 5'-terminal helix region of 16S rRNA. This is Ribosome-binding factor A from Micrococcus luteus (strain ATCC 4698 / DSM 20030 / JCM 1464 / CCM 169 / CCUG 5858 / IAM 1056 / NBRC 3333 / NCIMB 9278 / NCTC 2665 / VKM Ac-2230) (Micrococcus lysodeikticus).